The primary structure comprises 196 residues: UMP-CMP kinase (196 aa).

13–18 is a binding site for ATP; that stretch reads GAGKGT. Ser33 bears the Phosphoserine mark. Residues 33–63 are NMP; the sequence is SAGELLRDERKNPDSQYGELIEKYIKEGKIV. Arg39 is an a ribonucleoside 5'-phosphate binding site. Residues Lys43 and Lys55 each carry the N6-acetyllysine modification. 61–63 is a binding site for a ribonucleoside 5'-phosphate; the sequence is KIV. A Glycyl lysine isopeptide (Lys-Gly) (interchain with G-Cter in SUMO2) cross-link involves residue Lys73. 93–96 serves as a coordination point for a ribonucleoside 5'-phosphate; the sequence is GFPR. Asn100 serves as a coordination point for CMP. Lys106 bears the N6-succinyllysine mark. Positions 133–143 are LID; that stretch reads ERGKSSGRSDD. ATP is bound at residue Arg134. A ribonucleoside 5'-phosphate contacts are provided by Arg140 and Arg151. ATP is bound at residue Lys179. Phosphoserine is present on Ser180.

Belongs to the adenylate kinase family. UMP-CMP kinase subfamily. In terms of assembly, monomer. Requires Mg(2+) as cofactor. Ubiquitously expressed.

It localises to the nucleus. Its subcellular location is the cytoplasm. The enzyme catalyses CMP + ATP = CDP + ADP. It catalyses the reaction dCMP + ATP = dCDP + ADP. It carries out the reaction UMP + ATP = UDP + ADP. The catalysed reaction is a 2'-deoxyribonucleoside 5'-diphosphate + ATP = a 2'-deoxyribonucleoside 5'-triphosphate + ADP. The enzyme catalyses a ribonucleoside 5'-diphosphate + ATP = a ribonucleoside 5'-triphosphate + ADP. Catalyzes the phosphorylation of pyrimidine nucleoside monophosphates at the expense of ATP. Plays an important role in de novo pyrimidine nucleotide biosynthesis. Has preference for UMP and CMP as phosphate acceptors. Also displays broad nucleoside diphosphate kinase activity. This chain is UMP-CMP kinase, found in Homo sapiens (Human).